A 1034-amino-acid chain; its full sequence is Enteropeptidase (1034 aa).

A propeptide spanning residues 1–51 is cleaved from the precursor; that stretch reads MGSKRIIPSRHRSLSTYEVMFTALFAILMVLCAGLIAVSWLTIKGSEKDAA. Residues 2–18 lie on the Cytoplasmic side of the membrane; sequence GSKRIIPSRHRSLSTYE. The helical; Signal-anchor for type II membrane protein transmembrane segment at 19 to 47 threads the bilayer; sequence VMFTALFAILMVLCAGLIAVSWLTIKGSE. The Extracellular segment spans residues 48–1034; sequence KDAALGKSHE…FTEWIQSFLH (987 aa). In terms of domain architecture, SEA spans 54–169; that stretch reads KSHEARGTMK…NSIDITESLE (116 aa). 4 N-linked (GlcNAc...) asparagine glycosylation sites follow: asparagine 116, asparagine 147, asparagine 170, and asparagine 194. Residues 197–238 enclose the LDL-receptor class A 1 domain; that stretch reads IECLPGSRPCADALKCIAVDLFCDGELNCPDGSDEDSKICAT. 4 disulfides stabilise this stretch: cysteine 199/cysteine 212, cysteine 206/cysteine 225, cysteine 219/cysteine 236, and cysteine 240/cysteine 268. One can recognise a CUB 1 domain in the interval 240-349; it reads CDGKFLLTES…IGFNATYTAF (110 aa). Asparagine 283, asparagine 343, asparagine 350, asparagine 403, asparagine 455, asparagine 485, asparagine 518, asparagine 549, and asparagine 645 each carry an N-linked (GlcNAc...) asparagine glycan. The region spanning 357–519 is the MAM domain; sequence DEKINCNFED…ISLTYGICNV (163 aa). A disulfide bridge connects residues cysteine 539 and cysteine 567. A CUB 2 domain is found at 539 to 649; that stretch reads CGGPFELWEP…GGFKANFTTG (111 aa). One can recognise an LDL-receptor class A 2 domain in the interval 656–694; that stretch reads EPCKEDNFQCENGECVLLVNLCDGFSHCKDGSDEAHCVR. 3 disulfide bridges follow: cysteine 658-cysteine 670, cysteine 665-cysteine 683, and cysteine 677-cysteine 692. Residues 693-786 form the SRCR domain; sequence VRFLNGTANN…LILLQCNHKS (94 aa). N-linked (GlcNAc...) asparagine glycosylation is found at asparagine 697, asparagine 701, asparagine 721, asparagine 740, and asparagine 761. 6 disulfide bridges follow: cysteine 772-cysteine 782, cysteine 787-cysteine 911, cysteine 825-cysteine 841, cysteine 925-cysteine 992, cysteine 956-cysteine 971, and cysteine 982-cysteine 1010. The Peptidase S1 domain occupies 800 to 1034; it reads IVGGNDSREG…FTEWIQSFLH (235 aa). The N-linked (GlcNAc...) asparagine glycan is linked to asparagine 804. Histidine 840 acts as the Charge relay system in catalysis. Asparagine 863 carries an N-linked (GlcNAc...) asparagine glycan. Aspartate 891 (charge relay system) is an active-site residue. Asparagine 902 and asparagine 964 each carry an N-linked (GlcNAc...) asparagine glycan. Serine 986 (charge relay system) is an active-site residue.

This sequence belongs to the peptidase S1 family. Heterotrimer of a catalytic (light) chain, a multidomain (heavy) chain, and a mini chain. In terms of processing, the chains are derived from a single precursor that is cleaved by a trypsin-like protease. The mini chain may be cleaved by elastase.

Its subcellular location is the membrane. The enzyme catalyses Activation of trypsinogen by selective cleavage of 6-Lys-|-Ile-7 bond.. In terms of biological role, responsible for initiating activation of pancreatic proteolytic proenzymes (trypsin, chymotrypsin and carboxypeptidase A). It catalyzes the conversion of trypsinogen to trypsin which in turn activates other proenzymes including chymotrypsinogen, procarboxypeptidases, and proelastases. This is Enteropeptidase (TMPRSS15) from Sus scrofa (Pig).